Consider the following 77-residue polypeptide: U8-lycotoxin-Ls1t (77 aa).

An N-terminal signal peptide occupies residues 1 to 20; it reads MKLIIFTGLVLFAIVSLIEA. A propeptide spanning residues 21-26 is cleaved from the precursor; it reads QAENEK.

This sequence belongs to the neurotoxin 19 (CSTX) family. 08 (U8-Lctx) subfamily. Contains 4 disulfide bonds. Expressed by the venom gland.

Its subcellular location is the secreted. This Lycosa singoriensis (Wolf spider) protein is U8-lycotoxin-Ls1t.